The primary structure comprises 217 residues: Pyridoxine/pyridoxamine 5'-phosphate oxidase (217 aa).

Residues 14 to 17 (RKSY) and K72 contribute to the substrate site. FMN is bound by residues 67-72 (RVVLIK), 82-83 (YT), R88, and K89. Residues Y129, R133, and S137 each coordinate substrate. FMN-binding positions include 146 to 147 (QS) and W190. Substrate is bound at residue 196–198 (RLH). Residue R200 participates in FMN binding.

The protein belongs to the pyridoxamine 5'-phosphate oxidase family. Homodimer. It depends on FMN as a cofactor.

The enzyme catalyses pyridoxamine 5'-phosphate + O2 + H2O = pyridoxal 5'-phosphate + H2O2 + NH4(+). The catalysed reaction is pyridoxine 5'-phosphate + O2 = pyridoxal 5'-phosphate + H2O2. Its pathway is cofactor metabolism; pyridoxal 5'-phosphate salvage; pyridoxal 5'-phosphate from pyridoxamine 5'-phosphate: step 1/1. The protein operates within cofactor metabolism; pyridoxal 5'-phosphate salvage; pyridoxal 5'-phosphate from pyridoxine 5'-phosphate: step 1/1. In terms of biological role, catalyzes the oxidation of either pyridoxine 5'-phosphate (PNP) or pyridoxamine 5'-phosphate (PMP) into pyridoxal 5'-phosphate (PLP). This Acidovorax sp. (strain JS42) protein is Pyridoxine/pyridoxamine 5'-phosphate oxidase.